The primary structure comprises 271 residues: MASENMTPQDYIGHHLNNLQMDLRTFSLVDPHNPPATFWTLNIDSMFFSVVLGLLFLVMFRSVAKKATSGVPGKFQTAIELIVGFVHGSVKDMYHGKSKLIAPLALTIFVWVFLMNLMDLLPIDLLPYIAEHWLGLPATRVVPSADVNITLSMALGVFILILFYSIKMKGIGGFAKELTLQPFNHWAFIPVNLILEGVSLLSKPVSLGLRLFGNMYAGELIFILIAGLLPWWSQWILNVPWAIFHILIITLQAFIFMVLTIVYLSMASEEH.

Transmembrane regions (helical) follow at residues phenylalanine 38–valine 58, leucine 100–leucine 120, aspartate 146–isoleucine 166, leucine 220–proline 240, and alanine 242–valine 262.

The protein belongs to the ATPase A chain family. In terms of assembly, F-type ATPases have 2 components, CF(1) - the catalytic core - and CF(0) - the membrane proton channel. CF(1) has five subunits: alpha(3), beta(3), gamma(1), delta(1), epsilon(1). CF(0) has three main subunits: a(1), b(2) and c(9-12). The alpha and beta chains form an alternating ring which encloses part of the gamma chain. CF(1) is attached to CF(0) by a central stalk formed by the gamma and epsilon chains, while a peripheral stalk is formed by the delta and b chains.

Its subcellular location is the cell inner membrane. Functionally, key component of the proton channel; it plays a direct role in the translocation of protons across the membrane. This Salmonella arizonae (strain ATCC BAA-731 / CDC346-86 / RSK2980) protein is ATP synthase subunit a.